A 444-amino-acid polypeptide reads, in one-letter code: RING finger and transmembrane domain-containing protein 2 (444 aa).

The Extracellular portion of the chain corresponds to M1–H181. Disordered regions lie at residues M13–D41 and P92–P149. A compositionally biased stretch (basic residues) spans Y107–H121. Residues G131–E140 show a composition bias toward basic and acidic residues. A helical membrane pass occupies residues K182–L202. At R203–V214 the chain is on the cytoplasmic side. The chain crosses the membrane as a helical span at residues L215–F235. At S236–D255 the chain is on the extracellular side. The helical transmembrane segment at F256–A276 threads the bilayer. Topologically, residues L277 to S329 are cytoplasmic. The chain crosses the membrane as a helical span at residues Y330–G350. Over R351–Y444 the chain is Extracellular. The RING-type; degenerate zinc-finger motif lies at C384–R422.

The protein resides in the membrane. Its function is as follows. E3 ubiquitin-protein ligase that negatively regulates IL3-dependent cellular responses through IL3RA ubiquitination and degradation by the proteasome, having an anti-inflammatory effect. The sequence is that of RING finger and transmembrane domain-containing protein 2 (RNFT2) from Pongo abelii (Sumatran orangutan).